The following is a 967-amino-acid chain: Phosphoenolpyruvate carboxylase (967 aa).

S11 carries the phosphoserine modification. Active-site residues include H172 and K601.

It belongs to the PEPCase type 1 family. In terms of assembly, homotetramer. The cofactor is Mg(2+).

Its subcellular location is the cytoplasm. It carries out the reaction oxaloacetate + phosphate = phosphoenolpyruvate + hydrogencarbonate. It participates in photosynthesis; C3 acid pathway. With respect to regulation, by light-reversible phosphorylation. Functionally, through the carboxylation of phosphoenolpyruvate (PEP) it forms oxaloacetate, a four-carbon dicarboxylic acid source for the tricarboxylic acid cycle. This chain is Phosphoenolpyruvate carboxylase (PPCA1), found in Flaveria pringlei.